We begin with the raw amino-acid sequence, 166 residues long: Prorelaxin H1 (166 aa).

Residues 1–5 (SRAVA) form the signal peptide. 3 disulfides stabilise this stretch: Cys-16-Cys-153, Cys-28-Cys-166, and Cys-152-Cys-157. A propeptide spans 37–139 (SLSQEDAPQT…KYLGLDTHSQ (103 aa)) (connecting peptide).

Belongs to the insulin family. As to quaternary structure, heterodimer of a B chain and an A chain linked by two disulfide bonds. In terms of tissue distribution, expressed in the corpus luteum of pregnancy but not in the placenta.

The protein resides in the secreted. Functionally, relaxin is an ovarian hormone that acts with estrogen to produce dilatation of the birth canal in many mammals. May be involved in remodeling of connective tissues during pregnancy, promoting growth of pubic ligaments and ripening of the cervix. The protein is Prorelaxin H1 (RNL1) of Pan troglodytes (Chimpanzee).